The primary structure comprises 247 residues: Ribonuclease 3 (247 aa).

In terms of domain architecture, RNase III spans 21–149 (FKKLSKKIGI…LVGAIYLDRG (129 aa)). Glutamate 62 provides a ligand contact to Mg(2+). Aspartate 66 is a catalytic residue. Residues asparagine 135 and glutamate 138 each coordinate Mg(2+). The active site involves glutamate 138. A DRBM domain is found at 176-245 (DYKTQLQEYS…AKELYIRIRR (70 aa)).

It belongs to the ribonuclease III family. Homodimer. It depends on Mg(2+) as a cofactor.

It is found in the cytoplasm. The enzyme catalyses Endonucleolytic cleavage to 5'-phosphomonoester.. In terms of biological role, digests double-stranded RNA. Involved in the processing of primary rRNA transcript to yield the immediate precursors to the large and small rRNAs (23S and 16S). Processes some mRNAs, and tRNAs when they are encoded in the rRNA operon. Processes pre-crRNA and tracrRNA of type II CRISPR loci if present in the organism. This is Ribonuclease 3 from Leptospira borgpetersenii serovar Hardjo-bovis (strain L550).